The chain runs to 382 residues: D-galactonate dehydratase (382 aa).

Aspartate 183 is a binding site for Mg(2+). The Proton donor role is filled by histidine 185. Mg(2+) contacts are provided by glutamate 209 and glutamate 235. Histidine 285 (proton acceptor) is an active-site residue.

The protein belongs to the mandelate racemase/muconate lactonizing enzyme family. GalD subfamily. The cofactor is Mg(2+).

It carries out the reaction D-galactonate = 2-dehydro-3-deoxy-D-galactonate + H2O. It participates in carbohydrate acid metabolism; D-galactonate degradation; D-glyceraldehyde 3-phosphate and pyruvate from D-galactonate: step 1/3. Catalyzes the dehydration of D-galactonate to 2-keto-3-deoxy-D-galactonate. The chain is D-galactonate dehydratase from Ralstonia pickettii (strain 12J).